Reading from the N-terminus, the 620-residue chain is Arginine--tRNA ligase (620 aa).

The 'HIGH' region motif lies at alanine 147–glycine 157.

Belongs to the class-I aminoacyl-tRNA synthetase family. In terms of assembly, monomer.

The protein resides in the cytoplasm. It catalyses the reaction tRNA(Arg) + L-arginine + ATP = L-arginyl-tRNA(Arg) + AMP + diphosphate. The polypeptide is Arginine--tRNA ligase (Bifidobacterium longum subsp. infantis (strain ATCC 15697 / DSM 20088 / JCM 1222 / NCTC 11817 / S12)).